We begin with the raw amino-acid sequence, 978 residues long: Translation initiation factor IF-2 (978 aa).

Disordered regions lie at residues 107 to 129 (AEAPALETEQEVEAAPQVDNLEL) and 146 to 387 (QEEE…HRVQ). Over residues 146 to 169 (QEEELSERRRQREEQEARSREASE) the composition is skewed to basic and acidic residues. A compositionally biased stretch (low complexity) spans 170-186 (KAAAVAAEAAEAAAAQA). A compositionally biased stretch (basic and acidic residues) spans 215–259 (AEKEQHLAKEKGLAREKELAESKARAAEDVVRAADLGDRRRKAES). 2 stretches are compositionally biased toward low complexity: residues 295–326 (KPAAGAVPAKPAKPGAPGAPGAPAAGAAAGAG) and 349–361 (PTRGATAAPGAGR). The segment covering 375–386 (GSSDRDRDDHRV) has biased composition (basic and acidic residues). Residues 478-647 (PRAPVVTVMG…LLQAEVLELK (170 aa)) form the tr-type G domain. Positions 487–494 (GHVDHGKT) are G1. 487–494 (GHVDHGKT) contacts GTP. Residues 512 to 516 (GITQH) form a G2 region. The segment at 533 to 536 (DTPG) is G3. Residues 533-537 (DTPGH) and 587-590 (NKID) each bind GTP. Residues 587–590 (NKID) are G4. The tract at residues 623 to 625 (SAK) is G5.

Belongs to the TRAFAC class translation factor GTPase superfamily. Classic translation factor GTPase family. IF-2 subfamily.

Its subcellular location is the cytoplasm. Its function is as follows. One of the essential components for the initiation of protein synthesis. Protects formylmethionyl-tRNA from spontaneous hydrolysis and promotes its binding to the 30S ribosomal subunits. Also involved in the hydrolysis of GTP during the formation of the 70S ribosomal complex. The sequence is that of Translation initiation factor IF-2 from Albidiferax ferrireducens (strain ATCC BAA-621 / DSM 15236 / T118) (Rhodoferax ferrireducens).